The sequence spans 259 residues: Global transcriptional regulator CodY (259 aa).

The GAF domain stretch occupies residues 1 to 155; that stretch reads MDLLSKTRRI…GATVVGMEIL (155 aa). Residues 203–222 constitute a DNA-binding region (H-T-H motif); that stretch reads ASKIADRVGITRSVIVNALR.

This sequence belongs to the CodY family.

It localises to the cytoplasm. Functionally, DNA-binding global transcriptional regulator which is involved in the adaptive response to starvation and acts by directly or indirectly controlling the expression of numerous genes in response to nutrient availability. During rapid exponential growth, CodY is highly active and represses genes whose products allow adaptation to nutrient depletion. This chain is Global transcriptional regulator CodY, found in Brevibacillus brevis (strain 47 / JCM 6285 / NBRC 100599).